The sequence spans 827 residues: Polyhomeotic-like protein 2 (827 aa).

Disordered stretches follow at residues 1–78 (MEKE…QYLQ), 282–316 (GLGAEPSPQGTAAKASPAETSSETTAKNDKTSDLT), and 482–545 (QEPT…PPQA). A compositionally biased stretch (low complexity) spans 9–38 (SVASSASVTIPSTTSVSTSTSAGTLSNSSS). Residues 485–498 (TRTELRQSDKESQV) are compositionally biased toward basic and acidic residues. Positions 517 to 538 (AMTSGSGNNAPTVTGSAPQNGE) are enriched in polar residues. The short motif at 540 to 570 (KPPPQAVVKPQILTHVIEGFVIQEGAEPFPV) is the HD1 element. An FCS-type zinc finger spans residues 609 to 643 (NNQPEPVRTCEFCGNVDFAFNFKRSKRFCSTVCAK). Zn(2+) contacts are provided by Cys618, Cys621, Cys637, and Cys641. Positions 653-730 (MGLFPGKSSP…EPISPLSNSS (78 aa)) are disordered. Residues 661-675 (SPEDTKKPKASDESP) show a composition bias toward basic and acidic residues. 2 stretches are compositionally biased toward polar residues: residues 687 to 696 (PSIQTTTGAS) and 708 to 717 (GESSQCSDMS). The 65-residue stretch at 763–827 (WNVEDVYEFI…FARISMLKDS (65 aa)) folds into the SAM domain.

As to quaternary structure, component of a PRC1-like complex. As to expression, isoform 1 expression is stronger at the posterior border than in the anterior region within individual somites; On the contrary, isoform 2 expression is higher at the posterior border.

Its subcellular location is the nucleus. In terms of biological role, component of a Polycomb group (PcG) multiprotein PRC1-like complex, a complex class required to maintain the transcriptionally repressive state of many genes, including Hox genes, throughout development. PcG PRC1 complex acts via chromatin remodeling and modification of histones; it mediates monoubiquitination of histone H2A 'Lys-119', rendering chromatin heritably changed in its expressibility. This is Polyhomeotic-like protein 2 (phc2) from Danio rerio (Zebrafish).